Consider the following 291-residue polypeptide: Ribosomal RNA small subunit methyltransferase A (291 aa).

Asn-28, Leu-30, Gly-55, Glu-77, Asp-103, and Asn-123 together coordinate S-adenosyl-L-methionine.

This sequence belongs to the class I-like SAM-binding methyltransferase superfamily. rRNA adenine N(6)-methyltransferase family. RsmA subfamily.

It localises to the cytoplasm. The enzyme catalyses adenosine(1518)/adenosine(1519) in 16S rRNA + 4 S-adenosyl-L-methionine = N(6)-dimethyladenosine(1518)/N(6)-dimethyladenosine(1519) in 16S rRNA + 4 S-adenosyl-L-homocysteine + 4 H(+). Functionally, specifically dimethylates two adjacent adenosines (A1518 and A1519) in the loop of a conserved hairpin near the 3'-end of 16S rRNA in the 30S particle. May play a critical role in biogenesis of 30S subunits. In Azorhizobium caulinodans (strain ATCC 43989 / DSM 5975 / JCM 20966 / LMG 6465 / NBRC 14845 / NCIMB 13405 / ORS 571), this protein is Ribosomal RNA small subunit methyltransferase A.